A 472-amino-acid polypeptide reads, in one-letter code: ATP-dependent rRNA helicase rrp3 (472 aa).

The tract at residues 1-52 is disordered; it reads MRDVKKRKIAHEAPEHGSDTESTSSHKSVAQQDDPLETQDEATATESRPAPK. A compositionally biased stretch (basic and acidic residues) spans 10–19; that stretch reads AHEAPEHGSD. The segment covering 20 to 31 has biased composition (polar residues); sequence TESTSSHKSVAQ. The short motif at 52–80 is the Q motif element; it reads KSFKDLGIIDQLCEACETMGYKAPTPIQA. Residues 83-254 form the Helicase ATP-binding domain; that stretch reads IPLALQGRDL…RASLSNPLRV (172 aa). Residue 96–103 coordinates ATP; it reads AETGSGKT. The DEAD box motif lies at 202 to 205; that stretch reads DEAD. The Helicase C-terminal domain occupies 282–426; sequence YLVYLLNEFV…EYELEKDEVM (145 aa). A disordered region spans residues 444 to 472; that stretch reads KNFDEKRGTKAKKFGKGKRSRDEMDQEEG. Over residues 452–462 the composition is skewed to basic residues; it reads TKAKKFGKGKR.

Belongs to the DEAD box helicase family. DDX47/RRP3 subfamily. In terms of assembly, interacts with the SSU processome.

It is found in the nucleus. The catalysed reaction is ATP + H2O = ADP + phosphate + H(+). In terms of biological role, ATP-dependent rRNA helicase required for pre-ribosomal RNA processing. Involved in the maturation of the 35S-pre-rRNA and to its cleavage to mature 18S rRNA. In Aspergillus fumigatus (strain ATCC MYA-4609 / CBS 101355 / FGSC A1100 / Af293) (Neosartorya fumigata), this protein is ATP-dependent rRNA helicase rrp3.